Consider the following 421-residue polypeptide: Histidine--tRNA ligase (421 aa).

This sequence belongs to the class-II aminoacyl-tRNA synthetase family. Homodimer.

It is found in the cytoplasm. It catalyses the reaction tRNA(His) + L-histidine + ATP = L-histidyl-tRNA(His) + AMP + diphosphate + H(+). This Natranaerobius thermophilus (strain ATCC BAA-1301 / DSM 18059 / JW/NM-WN-LF) protein is Histidine--tRNA ligase.